The chain runs to 110 residues: Large ribosomal subunit protein uL22 (110 aa).

It belongs to the universal ribosomal protein uL22 family. As to quaternary structure, part of the 50S ribosomal subunit.

Functionally, this protein binds specifically to 23S rRNA; its binding is stimulated by other ribosomal proteins, e.g. L4, L17, and L20. It is important during the early stages of 50S assembly. It makes multiple contacts with different domains of the 23S rRNA in the assembled 50S subunit and ribosome. The globular domain of the protein is located near the polypeptide exit tunnel on the outside of the subunit, while an extended beta-hairpin is found that lines the wall of the exit tunnel in the center of the 70S ribosome. This chain is Large ribosomal subunit protein uL22, found in Marinobacter nauticus (strain ATCC 700491 / DSM 11845 / VT8) (Marinobacter aquaeolei).